A 338-amino-acid chain; its full sequence is Ornithine carbamoyltransferase (338 aa).

Carbamoyl phosphate-binding positions include Ser-56–Thr-59, Arg-107, and His-134–Gln-137. Residues Asn-168, Asp-232, and Ser-236–Met-237 contribute to the L-ornithine site. Carbamoyl phosphate-binding positions include Cys-274–Leu-275 and Arg-320.

Belongs to the aspartate/ornithine carbamoyltransferase superfamily. OTCase family.

The protein localises to the cytoplasm. It catalyses the reaction carbamoyl phosphate + L-ornithine = L-citrulline + phosphate + H(+). The protein operates within amino-acid degradation; L-arginine degradation via ADI pathway; carbamoyl phosphate from L-arginine: step 2/2. Its function is as follows. Reversibly catalyzes the transfer of the carbamoyl group from carbamoyl phosphate (CP) to the N(epsilon) atom of ornithine (ORN) to produce L-citrulline. The chain is Ornithine carbamoyltransferase from Buchnera aphidicola subsp. Acyrthosiphon pisum (strain 5A).